Reading from the N-terminus, the 336-residue chain is tRNA N6-adenosine threonylcarbamoyltransferase (336 aa).

Residues histidine 114 and histidine 118 each coordinate Fe cation. Substrate is bound by residues 136 to 140, aspartate 169, glycine 182, aspartate 186, and asparagine 275; that span reads LVSGG. Residue aspartate 302 coordinates Fe cation.

Belongs to the KAE1 / TsaD family. Fe(2+) serves as cofactor.

The protein localises to the cytoplasm. It carries out the reaction L-threonylcarbamoyladenylate + adenosine(37) in tRNA = N(6)-L-threonylcarbamoyladenosine(37) in tRNA + AMP + H(+). Required for the formation of a threonylcarbamoyl group on adenosine at position 37 (t(6)A37) in tRNAs that read codons beginning with adenine. Is involved in the transfer of the threonylcarbamoyl moiety of threonylcarbamoyl-AMP (TC-AMP) to the N6 group of A37, together with TsaE and TsaB. TsaD likely plays a direct catalytic role in this reaction. This is tRNA N6-adenosine threonylcarbamoyltransferase from Streptococcus agalactiae serotype Ia (strain ATCC 27591 / A909 / CDC SS700).